Reading from the N-terminus, the 1662-residue chain is ABC transporter A family member 5 (1662 aa).

7 consecutive transmembrane segments (helical) span residues I30–F50, S242–V262, I284–I304, I317–F337, F346–G366, L377–I397, and Q417–D437. Residues I505–S739 enclose the ABC transporter 1 domain. G541–S548 is a binding site for ATP. 7 helical membrane passes run F872–V892, I1052–G1072, L1102–V1122, F1130–L1150, G1163–L1183, I1201–I1221, and S1246–I1266. One can recognise an ABC transporter 2 domain in the interval L1322–K1557. G1360–T1367 lines the ATP pocket.

The protein belongs to the ABC transporter superfamily. ABCA family.

Its subcellular location is the membrane. This is ABC transporter A family member 5 (abcA5) from Dictyostelium discoideum (Social amoeba).